Consider the following 271-residue polypeptide: Formamidopyrimidine-DNA glycosylase (271 aa).

Pro-2 serves as the catalytic Schiff-base intermediate with DNA. Glu-3 acts as the Proton donor in catalysis. The active-site Proton donor; for beta-elimination activity is Lys-58. Residues His-92, Arg-111, and Arg-152 each coordinate DNA. The FPG-type zinc-finger motif lies at 237–271 (MVYGREGQACKHCGRELKHATIGQRATVWCAACQR). Arg-261 acts as the Proton donor; for delta-elimination activity in catalysis.

This sequence belongs to the FPG family. As to quaternary structure, monomer. Zn(2+) serves as cofactor.

The catalysed reaction is Hydrolysis of DNA containing ring-opened 7-methylguanine residues, releasing 2,6-diamino-4-hydroxy-5-(N-methyl)formamidopyrimidine.. It carries out the reaction 2'-deoxyribonucleotide-(2'-deoxyribose 5'-phosphate)-2'-deoxyribonucleotide-DNA = a 3'-end 2'-deoxyribonucleotide-(2,3-dehydro-2,3-deoxyribose 5'-phosphate)-DNA + a 5'-end 5'-phospho-2'-deoxyribonucleoside-DNA + H(+). Its function is as follows. Involved in base excision repair of DNA damaged by oxidation or by mutagenic agents. Acts as a DNA glycosylase that recognizes and removes damaged bases. Has a preference for oxidized purines, such as 7,8-dihydro-8-oxoguanine (8-oxoG). Has AP (apurinic/apyrimidinic) lyase activity and introduces nicks in the DNA strand. Cleaves the DNA backbone by beta-delta elimination to generate a single-strand break at the site of the removed base with both 3'- and 5'-phosphates. This chain is Formamidopyrimidine-DNA glycosylase, found in Xanthomonas campestris pv. campestris (strain B100).